Here is a 260-residue protein sequence, read N- to C-terminus: MMQSITSKALVLYNRNFREDDKLVKIFTEQAGKRMFFVKHATNSKLSPVIQPLTLANLLMKVNDDGLSYIQDYQDVQPFTRINSDLFIMAYATYVAALADASIPDSQPDAALFAFLTKTLELMEEGLDHEILTNIFEVQILSRFGVSLNFHECVFCHRTGLPFDFSFKFSGVLCPDHYREDDRRCHLHPNIPFLLDQFQAVEYSTLETISLKAEIKQQLREFIDQIYDDYVGIHLKSKKFIDSLGDWGSILKDKENKESI.

This sequence belongs to the RecO family.

Its function is as follows. Involved in DNA repair and RecF pathway recombination. This chain is DNA repair protein RecO, found in Streptococcus gordonii (strain Challis / ATCC 35105 / BCRC 15272 / CH1 / DL1 / V288).